The following is a 992-amino-acid chain: GATOR2 complex protein WDR59 (992 aa).

7 WD repeats span residues 57 to 98 (QSKW…GEVG), 103 to 143 (GHTR…KPTV), 146 to 185 (SAVA…TAVE), 189 to 229 (AHLS…KYLN), 232 to 276 (PCQV…APVH), 278 to 318 (FVGH…RVDY), and 319 to 362 (QMQR…SLSH). The interval 343–373 (PEPEKTPHPQDIDHQPSLSHGEEDAIKEDPP) is disordered. Over residues 344-373 (EPEKTPHPQDIDHQPSLSHGEEDAIKEDPP) the composition is skewed to basic and acidic residues. Residues 393-494 (QEFSLINVQI…RQLVSCLESF (102 aa)) enclose the RWD domain. Serine 564 carries the post-translational modification Phosphoserine. One copy of the WD 8 repeat lies at 660 to 706 (KSLGELYILNVNDTQETCQKNATSAMLVGRKDLVQVWSLATVATDLC). A phosphoserine mark is found at serine 839, serine 840, and serine 848. Residues 849–870 (LTYSDPRERERDQHDKNKRLLD) are disordered. The segment covering 853-869 (DPRERERDQHDKNKRLL) has biased composition (basic and acidic residues). The C4-type zinc-finger motif lies at 919–939 (YCSHCRSEVRGTQCAICKGFT). Residues cysteine 920, cysteine 923, cysteine 932, cysteine 935, cysteine 945, cysteine 956, histidine 961, histidine 964, histidine 967, cysteine 978, cysteine 982, cysteine 984, and cysteine 986 each coordinate Zn(2+). The segment at 940 to 989 (FQCAICHVAVRGSSNFCLTCGHGGHTSHMMEWFRTQEVCPTGCGCHCLLE) adopts an RING-type; atypical zinc-finger fold.

This sequence belongs to the WD repeat WDR59 family. In terms of assembly, component of the GATOR2 subcomplex, composed of MIOS, SEC13, SEH1L, WDR24 and WDR59. The GATOR2 complex interacts with CASTOR1 and CASTOR2; the interaction is negatively regulated by arginine. The GATOR2 complex interacts with SESN1, SESN2 and SESN3; the interaction is negatively regulated by amino acids. Interacts with DDB1-CUL4A/B E3 ligase complexes.

Its subcellular location is the lysosome membrane. The GATOR2 complex is negatively regulated by the upstream amino acid sensors CASTOR1 and SESN2, which sequester the GATOR2 complex in absence of amino acids. In the presence of abundant amino acids, GATOR2 is released from CASTOR1 and SESN2 and activated. In terms of biological role, as a component of the GATOR2 complex, functions as an activator of the amino acid-sensing branch of the mTORC1 signaling pathway. The GATOR2 complex indirectly activates mTORC1 through the inhibition of the GATOR1 subcomplex. GATOR2 probably acts as an E3 ubiquitin-protein ligase toward GATOR1. In the presence of abundant amino acids, the GATOR2 complex mediates ubiquitination of the NPRL2 core component of the GATOR1 complex, leading to GATOR1 inactivation. In the absence of amino acids, GATOR2 is inhibited, activating the GATOR1 complex. The polypeptide is GATOR2 complex protein WDR59 (Mus musculus (Mouse)).